The chain runs to 234 residues: Uridylate kinase (234 aa).

Residue 9–12 (KLSG) coordinates ATP. Gly51 contributes to the UMP binding site. 2 residues coordinate ATP: Gly52 and Arg56. UMP-binding positions include Asp71 and 132-139 (CGNPFFTT). Residues Thr159, Tyr165, and Asp168 each contribute to the ATP site.

The protein belongs to the UMP kinase family. Homohexamer.

The protein resides in the cytoplasm. It carries out the reaction UMP + ATP = UDP + ADP. The protein operates within pyrimidine metabolism; CTP biosynthesis via de novo pathway; UDP from UMP (UMPK route): step 1/1. With respect to regulation, inhibited by UTP. In terms of biological role, catalyzes the reversible phosphorylation of UMP to UDP. The polypeptide is Uridylate kinase (Prochlorococcus marinus (strain MIT 9515)).